The chain runs to 133 residues: Glycophorin-A (133 aa).

O-linked (GalNAc...) threonine glycosylation is found at threonine 1 and threonine 6. Residues 1–34 (TETPVTGEQGSATPGNVSNATVTAGKPSATSPGV) form a disordered region. Residues 1 to 62 (TETPVTGEQG…SYHQDFSHAE (62 aa)) are Extracellular-facing. A glycan (O-linked (GalNAc...) serine) is linked at serine 11. Residue threonine 13 is glycosylated (O-linked (GalNAc...) threonine). A glycan (N-linked (GlcNAc...) asparagine) is linked at asparagine 19. Threonine 21, threonine 23, and threonine 30 each carry an O-linked (GalNAc...) threonine glycan. Residue serine 31 is glycosylated (O-linked (GalNAc...) serine). An N-linked (GlcNAc...) asparagine glycan is attached at asparagine 39. Threonine 41 and threonine 48 each carry an O-linked (GalNAc...) threonine glycan. A helical membrane pass occupies residues 63-85 (ITGIIFAVMAGLLLIIFLIAYLI). At 86-133 (RRMIKKPLPVPKPQDSPDIGTENTADPSELQDTEDPPLTSVEIETPAS) the chain is on the cytoplasmic side. The disordered stretch occupies residues 93 to 133 (LPVPKPQDSPDIGTENTADPSELQDTEDPPLTSVEIETPAS).

This sequence belongs to the glycophorin-A family. As to quaternary structure, homodimer. Component of the ankyrin-1 complex in the erythrocyte, composed of ANK1, RHCE, RHAG, SLC4A1, EPB42, GYPA, GYPB and AQP1. Interacts with SLC4A1; a GYPA monomer is bound at each end of the SLC4A1 dimer forming a heterotetramer.

The protein localises to the membrane. In terms of biological role, component of the ankyrin-1 complex, a multiprotein complex involved in the stability and shape of the erythrocyte membrane. Glycophorin A is the major intrinsic membrane protein of the erythrocyte. The N-terminal glycosylated segment, which lies outside the erythrocyte membrane, has MN blood group receptors. Appears to be important for the function of SLC4A1 and is required for high activity of SLC4A1. May be involved in translocation of SLC4A1 to the plasma membrane. The protein is Glycophorin-A of Sus scrofa (Pig).